Reading from the N-terminus, the 244-residue chain is UPF0173 metal-dependent hydrolase RoseRS_3945 (244 aa).

This sequence belongs to the UPF0173 family.

The protein is UPF0173 metal-dependent hydrolase RoseRS_3945 of Roseiflexus sp. (strain RS-1).